The primary structure comprises 993 residues: Importin subunit beta-5 (993 aa).

The Importin N-terminal domain maps to 24 to 100 (AELGLRDLEK…RETLLHLLVS (77 aa)).

The protein localises to the nucleus. Its function is as follows. Required for nuclear protein import and mediates docking of import substrate to distinct nucleoporins. Serves a receptor for nuclear localization signals. Mediates the nuclear import of TATA-binding protein (TBP) and of histones H2A and H2B. In Schizosaccharomyces pombe (strain 972 / ATCC 24843) (Fission yeast), this protein is Importin subunit beta-5 (kap114).